Reading from the N-terminus, the 410-residue chain is Na(+)/H(+) antiporter NhaA 1/4 (410 aa).

The next 11 helical transmembrane spans lie at valine 16–leucine 36, leucine 55–valine 75, alanine 95–phenylalanine 115, glycine 125–valine 145, phenylalanine 156–cysteine 176, serine 178–leucine 198, alanine 215–valine 235, isoleucine 275–phenylalanine 295, alanine 299–glycine 319, isoleucine 340–leucine 360, and alanine 371–glycine 391.

It belongs to the NhaA Na(+)/H(+) (TC 2.A.33) antiporter family.

The protein localises to the cell membrane. It carries out the reaction Na(+)(in) + 2 H(+)(out) = Na(+)(out) + 2 H(+)(in). In terms of biological role, na(+)/H(+) antiporter that extrudes sodium in exchange for external protons. This Streptomyces coelicolor (strain ATCC BAA-471 / A3(2) / M145) protein is Na(+)/H(+) antiporter NhaA 1/4.